Consider the following 142-residue polypeptide: Large ribosomal subunit protein bL17 (142 aa).

Belongs to the bacterial ribosomal protein bL17 family. In terms of assembly, part of the 50S ribosomal subunit. Contacts protein L32.

The sequence is that of Large ribosomal subunit protein bL17 from Brucella canis (strain ATCC 23365 / NCTC 10854 / RM-666).